Consider the following 407-residue polypeptide: ATP-citrate synthase subunit alpha chain protein 1 (407 aa).

Citrate-binding residues include N327, T329, and R360.

The protein belongs to the succinate/malate CoA ligase beta subunit family. Heterooctamer of 4 alpha and 4 beta chains.

Its subcellular location is the cytoplasm. The protein localises to the cytosol. The catalysed reaction is oxaloacetate + acetyl-CoA + ADP + phosphate = citrate + ATP + CoA. In terms of biological role, ATP citrate-lyase is the primary enzyme responsible for the synthesis of cytosolic acetyl-CoA, used for the elongation of fatty acids and biosynthesis of isoprenoids, flavonoids and malonated derivatives. May supply substrate to the cytosolic acetyl-CoA carboxylase, which generates the malonyl-CoA used for the synthesis of a multitude of compounds, including very long chain fatty acids and flavonoids. In contrast to all known animal ACL enzymes having a homomeric structure, plant ACLs are composed of alpha and beta chains. The sequence is that of ATP-citrate synthase subunit alpha chain protein 1 (ACLA-1) from Oryza sativa subsp. japonica (Rice).